The sequence spans 111 residues: Ribonuclease P protein component (111 aa).

It belongs to the RnpA family. Consists of a catalytic RNA component (M1 or rnpB) and a protein subunit.

It catalyses the reaction Endonucleolytic cleavage of RNA, removing 5'-extranucleotides from tRNA precursor.. RNaseP catalyzes the removal of the 5'-leader sequence from pre-tRNA to produce the mature 5'-terminus. It can also cleave other RNA substrates such as 4.5S RNA. The protein component plays an auxiliary but essential role in vivo by binding to the 5'-leader sequence and broadening the substrate specificity of the ribozyme. In Alkaliphilus metalliredigens (strain QYMF), this protein is Ribonuclease P protein component.